Reading from the N-terminus, the 244-residue chain is uncharacterized protein (244 aa).

The next 2 helical transmembrane spans lie at 29–49 (WIPWTIFGGSFLGGWYLTQHM) and 139–159 (LGMKLTGYPFLIHGGILATVI).

The protein belongs to the FMP10 family.

It is found in the mitochondrion membrane. This is an uncharacterized protein from Saccharomyces cerevisiae (strain ATCC 204508 / S288c) (Baker's yeast).